Consider the following 933-residue polypeptide: Serine/threonine-protein kinase PknD (933 aa).

In terms of domain architecture, Protein kinase spans 4–291; the sequence is YDIIRMIGKG…ELKDDIEQHL (288 aa). Residues 10–18 and K33 contribute to the ATP site; that span reads IGKGGMGEV. The active-site Proton acceptor is the D138.

The protein belongs to the protein kinase superfamily. Ser/Thr protein kinase family. In terms of processing, autophosphorylated on serine and threonine residues.

It carries out the reaction L-seryl-[protein] + ATP = O-phospho-L-seryl-[protein] + ADP + H(+). The catalysed reaction is L-threonyl-[protein] + ATP = O-phospho-L-threonyl-[protein] + ADP + H(+). Together with the serine/threonine kinase Pkn1, may play a role in the specific interactions with host proteins during intracellular growth. The chain is Serine/threonine-protein kinase PknD from Chlamydia felis (strain Fe/C-56) (Chlamydophila felis).